A 581-amino-acid chain; its full sequence is 2-succinyl-5-enolpyruvyl-6-hydroxy-3-cyclohexene-1-carboxylate synthase (581 aa).

The protein belongs to the TPP enzyme family. MenD subfamily. Homodimer. The cofactor is Mg(2+). Mn(2+) serves as cofactor. It depends on thiamine diphosphate as a cofactor.

The enzyme catalyses isochorismate + 2-oxoglutarate + H(+) = 5-enolpyruvoyl-6-hydroxy-2-succinyl-cyclohex-3-ene-1-carboxylate + CO2. The protein operates within quinol/quinone metabolism; 1,4-dihydroxy-2-naphthoate biosynthesis; 1,4-dihydroxy-2-naphthoate from chorismate: step 2/7. Its pathway is quinol/quinone metabolism; menaquinone biosynthesis. Functionally, catalyzes the thiamine diphosphate-dependent decarboxylation of 2-oxoglutarate and the subsequent addition of the resulting succinic semialdehyde-thiamine pyrophosphate anion to isochorismate to yield 2-succinyl-5-enolpyruvyl-6-hydroxy-3-cyclohexene-1-carboxylate (SEPHCHC). The chain is 2-succinyl-5-enolpyruvyl-6-hydroxy-3-cyclohexene-1-carboxylate synthase from Chlorobium phaeobacteroides (strain BS1).